The following is a 538-amino-acid chain: Putative cysteine ligase BshC (538 aa).

The stretch at 460–483 (KINEQIELLEKMLKRNVEKKHEVQ) forms a coiled coil.

It belongs to the BshC family.

In terms of biological role, involved in bacillithiol (BSH) biosynthesis. May catalyze the last step of the pathway, the addition of cysteine to glucosamine malate (GlcN-Mal) to generate BSH. This Bacillus mycoides (strain KBAB4) (Bacillus weihenstephanensis) protein is Putative cysteine ligase BshC.